Reading from the N-terminus, the 205-residue chain is Regulatory protein RecX (205 aa).

It belongs to the RecX family.

The protein resides in the cytoplasm. Its function is as follows. Modulates RecA activity. This Finegoldia magna (strain ATCC 29328 / DSM 20472 / WAL 2508) (Peptostreptococcus magnus) protein is Regulatory protein RecX.